A 325-amino-acid chain; its full sequence is UPF0285 protein MmarC7_1666 (325 aa).

The protein belongs to the UPF0285 family.

This Methanococcus maripaludis (strain C7 / ATCC BAA-1331) protein is UPF0285 protein MmarC7_1666.